We begin with the raw amino-acid sequence, 107 residues long: Ribonuclease P protein component 4 (107 aa).

The Zn(2+) site is built by cysteine 62, cysteine 65, cysteine 87, and cysteine 90.

Belongs to the eukaryotic/archaeal RNase P protein component 4 family. Consists of a catalytic RNA component and at least 4-5 protein subunits. Zn(2+) serves as cofactor.

The protein localises to the cytoplasm. The enzyme catalyses Endonucleolytic cleavage of RNA, removing 5'-extranucleotides from tRNA precursor.. Functionally, part of ribonuclease P, a protein complex that generates mature tRNA molecules by cleaving their 5'-ends. This chain is Ribonuclease P protein component 4, found in Archaeoglobus fulgidus (strain ATCC 49558 / DSM 4304 / JCM 9628 / NBRC 100126 / VC-16).